The primary structure comprises 251 residues: Coenzyme F420:L-glutamate ligase (251 aa).

Residues leucine 9 to isoleucine 12, serine 38 to threonine 39, and lysine 43 contribute to the GTP site. An a divalent metal cation-binding site is contributed by aspartate 113. Asparagine 116 is a binding site for GTP. A divalent metal cation contacts are provided by aspartate 149, threonine 150, and glutamate 207. Alanine 205–threonine 212 serves as a coordination point for GTP.

This sequence belongs to the CofE family. As to quaternary structure, homodimer. The cofactor is Mg(2+). Mn(2+) is required as a cofactor. Requires K(+) as cofactor.

It catalyses the reaction oxidized coenzyme F420-0 + GTP + L-glutamate = oxidized coenzyme F420-1 + GDP + phosphate + H(+). The enzyme catalyses oxidized coenzyme F420-1 + GTP + L-glutamate = oxidized coenzyme F420-2 + GDP + phosphate + H(+). The protein operates within cofactor biosynthesis; coenzyme F420 biosynthesis. Its function is as follows. Catalyzes the GTP-dependent successive addition of two or more gamma-linked L-glutamates to the L-lactyl phosphodiester of 7,8-didemethyl-8-hydroxy-5-deazariboflavin (F420-0) to form coenzyme F420-0-glutamyl-glutamate (F420-2) or polyglutamated F420 derivatives. The polypeptide is Coenzyme F420:L-glutamate ligase (Halorubrum lacusprofundi (strain ATCC 49239 / DSM 5036 / JCM 8891 / ACAM 34)).